Consider the following 333-residue polypeptide: Holliday junction branch migration complex subunit RuvB (333 aa).

Positions 1–173 (MTAPENLDAA…FGIIEHLEYY (173 aa)) are large ATPase domain (RuvB-L). ATP contacts are provided by residues Leu11, Arg12, Gly53, Lys56, Thr57, Thr58, 120-122 (EDF), Arg163, Tyr173, and Arg210. Residue Thr57 coordinates Mg(2+). The tract at residues 174 to 244 (TAEEIATNLL…RAQSALDKLG (71 aa)) is small ATPAse domain (RuvB-S). Residues 247–333 (SAGLDDRDKK…IDDGNGIFLN (87 aa)) form a head domain (RuvB-H) region. DNA-binding residues include Arg302 and Arg307.

The protein belongs to the RuvB family. Homohexamer. Forms an RuvA(8)-RuvB(12)-Holliday junction (HJ) complex. HJ DNA is sandwiched between 2 RuvA tetramers; dsDNA enters through RuvA and exits via RuvB. An RuvB hexamer assembles on each DNA strand where it exits the tetramer. Each RuvB hexamer is contacted by two RuvA subunits (via domain III) on 2 adjacent RuvB subunits; this complex drives branch migration. In the full resolvosome a probable DNA-RuvA(4)-RuvB(12)-RuvC(2) complex forms which resolves the HJ.

The protein localises to the cytoplasm. The enzyme catalyses ATP + H2O = ADP + phosphate + H(+). Its function is as follows. The RuvA-RuvB-RuvC complex processes Holliday junction (HJ) DNA during genetic recombination and DNA repair, while the RuvA-RuvB complex plays an important role in the rescue of blocked DNA replication forks via replication fork reversal (RFR). RuvA specifically binds to HJ cruciform DNA, conferring on it an open structure. The RuvB hexamer acts as an ATP-dependent pump, pulling dsDNA into and through the RuvAB complex. RuvB forms 2 homohexamers on either side of HJ DNA bound by 1 or 2 RuvA tetramers; 4 subunits per hexamer contact DNA at a time. Coordinated motions by a converter formed by DNA-disengaged RuvB subunits stimulates ATP hydrolysis and nucleotide exchange. Immobilization of the converter enables RuvB to convert the ATP-contained energy into a lever motion, pulling 2 nucleotides of DNA out of the RuvA tetramer per ATP hydrolyzed, thus driving DNA branch migration. The RuvB motors rotate together with the DNA substrate, which together with the progressing nucleotide cycle form the mechanistic basis for DNA recombination by continuous HJ branch migration. Branch migration allows RuvC to scan DNA until it finds its consensus sequence, where it cleaves and resolves cruciform DNA. In Deinococcus radiodurans (strain ATCC 13939 / DSM 20539 / JCM 16871 / CCUG 27074 / LMG 4051 / NBRC 15346 / NCIMB 9279 / VKM B-1422 / R1), this protein is Holliday junction branch migration complex subunit RuvB.